The sequence spans 285 residues: (3S)-malyl-CoA thioesterase (285 aa).

Residues Arg-70 and Glu-122 each contribute to the substrate site. Glu-122 and Asp-148 together coordinate Mg(2+).

Belongs to the HpcH/HpaI aldolase family. Homodimer or homotrimer. The cofactor is Mg(2+).

It catalyses the reaction (S)-malyl-CoA + H2O = (S)-malate + CoA + H(+). In terms of biological role, catalyzes the hydrolysis of (3S)-malyl-CoA to (3S)-malate and free CoA. Inactive towards beta-methylmalyl-CoA and other CoA esters. This is (3S)-malyl-CoA thioesterase from Cereibacter sphaeroides (strain ATCC 17025 / ATH 2.4.3) (Rhodobacter sphaeroides).